The following is a 742-amino-acid chain: Collectin-12 (742 aa).

The Cytoplasmic segment spans residues 1-37; sequence MKDDFAEEEEVQSFGYKRFGIQEGTQCTKCKNNWALK. A helical; Signal-anchor for type II membrane protein membrane pass occupies residues 38 to 58; the sequence is FSIILLYVLCALLTITVAILG. The Extracellular portion of the chain corresponds to 59 to 742; that stretch reads YKVVEKMDTV…EREAVPSSIL (684 aa). The stretch at 104 to 142 forms a coiled coil; sequence TNSELSTFRSDILDLRQQLQEITEKTSKNKDMLEKLQAN. 3 N-linked (GlcNAc...) asparagine glycosylation sites follow: asparagine 159, asparagine 168, and asparagine 271. Residues 220 to 301 adopt a coiled-coil conformation; that stretch reads ITNLQRSVDD…SFTGQMDNIT (82 aa). Residues 439 to 608 form a disordered region; that stretch reads TILQGPPGPR…TPASEVNGCP (170 aa). 2 consecutive Collagen-like domains span residues 452 to 511 and 527 to 586; these read GDRG…KGSR and GPPG…PGPS. Residues 501-514 are compositionally biased toward low complexity; that stretch reads SKGSQGPKGSRGSP. Pro residues predominate over residues 516–532; sequence KPGPQGPSGDPGPPGPP. Residues 534-556 show a composition bias toward low complexity; sequence KDGLPGPQGPPGFQGLQGTVGEP. A compositionally biased stretch (pro residues) spans 571 to 585; the sequence is PGMPGPKGPPGPPGP. 3 disulfides stabilise this stretch: cysteine 607/cysteine 618, cysteine 635/cysteine 730, and cysteine 708/cysteine 722. Positions 614 to 731 constitute a C-type lectin domain; the sequence is FTDKCYYFSV…CDEINNFICE (118 aa). Phenylalanine 644, asparagine 646, glutamate 650, aspartate 670, and glutamate 674 together coordinate Ca(2+). Residues lysine 691, glutamine 694, and aspartate 696 each contribute to the a carbohydrate site. Ca(2+) contacts are provided by glutamine 694, aspartate 696, asparagine 697, glutamate 706, aspartate 707, asparagine 718, aspartate 719, and glutamate 731. Glutamate 706 serves as a coordination point for a carbohydrate. A carbohydrate-binding residues include asparagine 718 and aspartate 719.

The extracellular domain forms a stable trimer. The extracellular domain interacts with fibrillar amyloid-beta peptide. As to expression, highly expressed in lung, spleen, small and large intestine, stomach and brain. Expressed in neonatal microglia.

The protein localises to the membrane. Functionally, scavenger receptor that displays several functions associated with host defense. Promotes binding and phagocytosis of Gram-positive, Gram-negative bacteria and yeast. Mediates the recognition, internalization and degradation of oxidatively modified low density lipoprotein (oxLDL) by vascular endothelial cells. Binds to several carbohydrates including Gal-type ligands, D-galactose, L- and D-fucose, GalNAc, T and Tn antigens in a calcium-dependent manner and internalizes specifically GalNAc in nurse-like cells. Also binds to sialyl Lewis X or a trisaccharide and asialo-orosomucoid (ASOR). In Rattus norvegicus (Rat), this protein is Collectin-12 (Colec12).